The sequence spans 229 residues: Putative N-acetylmannosamine-6-phosphate 2-epimerase 2 (229 aa).

Belongs to the NanE family.

The enzyme catalyses an N-acyl-D-glucosamine 6-phosphate = an N-acyl-D-mannosamine 6-phosphate. Its pathway is amino-sugar metabolism; N-acetylneuraminate degradation; D-fructose 6-phosphate from N-acetylneuraminate: step 3/5. Its function is as follows. Converts N-acetylmannosamine-6-phosphate (ManNAc-6-P) to N-acetylglucosamine-6-phosphate (GlcNAc-6-P). The sequence is that of Putative N-acetylmannosamine-6-phosphate 2-epimerase 2 (nanE2) from Salmonella typhimurium (strain LT2 / SGSC1412 / ATCC 700720).